The sequence spans 356 residues: DNA polymerase IV (356 aa).

The UmuC domain occupies 7–188 (IIHIDMDCFY…LPLKKISGVG (182 aa)). Mg(2+) contacts are provided by D11 and D106. E107 is an active-site residue.

It belongs to the DNA polymerase type-Y family. Monomer. Mg(2+) serves as cofactor.

Its subcellular location is the cytoplasm. It carries out the reaction DNA(n) + a 2'-deoxyribonucleoside 5'-triphosphate = DNA(n+1) + diphosphate. Poorly processive, error-prone DNA polymerase involved in untargeted mutagenesis. Copies undamaged DNA at stalled replication forks, which arise in vivo from mismatched or misaligned primer ends. These misaligned primers can be extended by PolIV. Exhibits no 3'-5' exonuclease (proofreading) activity. May be involved in translesional synthesis, in conjunction with the beta clamp from PolIII. This chain is DNA polymerase IV, found in Glaesserella parasuis serovar 5 (strain SH0165) (Haemophilus parasuis).